The following is a 490-amino-acid chain: Glutamate--tRNA ligase (490 aa).

The 'HIGH' region signature appears at 13–23 (PSPTGTPHVGL). Residues 257 to 261 (KLSKR) carry the 'KMSKS' region motif. Position 260 (K260) interacts with ATP.

This sequence belongs to the class-I aminoacyl-tRNA synthetase family. Glutamate--tRNA ligase type 1 subfamily. As to quaternary structure, monomer.

Its subcellular location is the cytoplasm. The catalysed reaction is tRNA(Glu) + L-glutamate + ATP = L-glutamyl-tRNA(Glu) + AMP + diphosphate. Its function is as follows. Catalyzes the attachment of glutamate to tRNA(Glu) in a two-step reaction: glutamate is first activated by ATP to form Glu-AMP and then transferred to the acceptor end of tRNA(Glu). This chain is Glutamate--tRNA ligase, found in Mycobacterium tuberculosis (strain ATCC 25177 / H37Ra).